The primary structure comprises 210 residues: Thymidylate kinase (210 aa).

Residue 11–18 participates in ATP binding; sequence GVDGSGKS.

This sequence belongs to the thymidylate kinase family.

The catalysed reaction is dTMP + ATP = dTDP + ADP. Phosphorylation of dTMP to form dTDP in both de novo and salvage pathways of dTTP synthesis. The polypeptide is Thymidylate kinase (Mycoplasmoides gallisepticum (strain R(low / passage 15 / clone 2)) (Mycoplasma gallisepticum)).